The sequence spans 607 residues: MNNDQRLERQSRIRNFSIIAHIDHGKSTLADRILERTGALTDREMKEQALDAMDLERERGITIKLNAVQLKYKAKDGNEYIFHLIDTPGHVDFTYEVSRSLAACEGALLIVDSAQGIEAQTLANVYLALDNDLEILPVINKIDLPSAEPERVKKEVEDVIGLDASDAVLASAKNGIGIEDILEQVVEKVPAPAGDPTAPLKALIFDSLYDPYRGVIAYIRIVEGTVRPGEKIRMMQTGKEFEVNEVGVFTPKAVKCEELTVGDVGFLTAAIKNVSDSRVGDTITSAVNPAQEALPGYRRMNPMVYCGLYPIDTNDYNDLREALERLELNDASLQYEPETSQALGFGFRCGFLGLLHMEIIQERIEREFGISLITTAPSVIYHVTLTDGNTIQIDNPTNMPDPQKMDHVEEPYVKSTVMVPNDYVGAVMELCQSKRGIFVDMQYLDENRVQIIYEIPLSEIVYDFFDQLKSNTKGYASFDYELIGYRQSKLVKMDILLNGEKVDALSVIVHRDSAYERGKVIVEKLKELIPRQQFEVPVQASIGTKIIARSTIKAIRKNVLAKCYGGDISRKRKLLEKQKEGKKRMKAVGNVEIPQEAFMAVLRMDDK.

Residues 11-193 (SRIRNFSIIA…QVVEKVPAPA (183 aa)) form the tr-type G domain. GTP-binding positions include 23-28 (DHGKST) and 140-143 (NKID).

This sequence belongs to the TRAFAC class translation factor GTPase superfamily. Classic translation factor GTPase family. LepA subfamily.

It is found in the cell membrane. The enzyme catalyses GTP + H2O = GDP + phosphate + H(+). Required for accurate and efficient protein synthesis under certain stress conditions. May act as a fidelity factor of the translation reaction, by catalyzing a one-codon backward translocation of tRNAs on improperly translocated ribosomes. Back-translocation proceeds from a post-translocation (POST) complex to a pre-translocation (PRE) complex, thus giving elongation factor G a second chance to translocate the tRNAs correctly. Binds to ribosomes in a GTP-dependent manner. In Shouchella clausii (strain KSM-K16) (Alkalihalobacillus clausii), this protein is Elongation factor 4.